The chain runs to 130 residues: Small ribosomal subunit protein uS9 (130 aa).

It belongs to the universal ribosomal protein uS9 family.

This is Small ribosomal subunit protein uS9 (rpsI) from Geobacillus stearothermophilus (Bacillus stearothermophilus).